A 48-amino-acid chain; its full sequence is Sperm protamine P1 (48 aa).

This sequence belongs to the protamine P1 family. As to expression, testis.

Its subcellular location is the nucleus. The protein localises to the chromosome. In terms of biological role, protamines substitute for histones in the chromatin of sperm during the haploid phase of spermatogenesis. They compact sperm DNA into a highly condensed, stable and inactive complex. This chain is Sperm protamine P1 (PRM1), found in Corynorhinus townsendii (Townsend's big-eared bat).